Reading from the N-terminus, the 179-residue chain is Cytochrome b6-f complex iron-sulfur subunit (179 aa).

The chain crosses the membrane as a helical span at residues 21–43 (LLTFGSATGVALGMLYPVVRYFI). The region spanning 61–162 (GNDISVSDFL…AAVSDDKITF (102 aa)) is the Rieske domain. Residues Cys108, His110, Cys126, and His129 each contribute to the [2Fe-2S] cluster site. A disulfide bond links Cys113 and Cys128.

It belongs to the Rieske iron-sulfur protein family. In terms of assembly, the 4 large subunits of the cytochrome b6-f complex are cytochrome b6, subunit IV (17 kDa polypeptide, PetD), cytochrome f and the Rieske protein, while the 4 small subunits are PetG, PetL, PetM and PetN. The complex functions as a dimer. [2Fe-2S] cluster is required as a cofactor.

Its subcellular location is the cellular thylakoid membrane. The catalysed reaction is 2 oxidized [plastocyanin] + a plastoquinol + 2 H(+)(in) = 2 reduced [plastocyanin] + a plastoquinone + 4 H(+)(out). In terms of biological role, component of the cytochrome b6-f complex, which mediates electron transfer between photosystem II (PSII) and photosystem I (PSI), cyclic electron flow around PSI, and state transitions. The polypeptide is Cytochrome b6-f complex iron-sulfur subunit (Cyanothece sp. (strain PCC 7425 / ATCC 29141)).